Here is a 1116-residue protein sequence, read N- to C-terminus: Protein translocase subunit SecA (1116 aa).

Residues glutamine 177, 195-199, and aspartate 692 contribute to the ATP site; that span reads GEGKT.

It belongs to the SecA family. Monomer and homodimer. Part of the essential Sec protein translocation apparatus which comprises SecA, SecYEG and auxiliary proteins SecDF. Other proteins may also be involved.

The protein resides in the cell inner membrane. Its subcellular location is the cytoplasm. The enzyme catalyses ATP + H2O + cellular proteinSide 1 = ADP + phosphate + cellular proteinSide 2.. Its function is as follows. Part of the Sec protein translocase complex. Interacts with the SecYEG preprotein conducting channel. Has a central role in coupling the hydrolysis of ATP to the transfer of proteins into and across the cell membrane, serving as an ATP-driven molecular motor driving the stepwise translocation of polypeptide chains across the membrane. This is Protein translocase subunit SecA from Flavobacterium psychrophilum (strain ATCC 49511 / DSM 21280 / CIP 103535 / JIP02/86).